A 205-amino-acid polypeptide reads, in one-letter code: Pyrrolidone-carboxylate peptidase (205 aa).

Active-site residues include Glu79, Cys142, and His165.

Belongs to the peptidase C15 family. As to quaternary structure, homotetramer.

The protein localises to the cytoplasm. The enzyme catalyses Release of an N-terminal pyroglutamyl group from a polypeptide, the second amino acid generally not being Pro.. Its function is as follows. Removes 5-oxoproline from various penultimate amino acid residues except L-proline. The protein is Pyrrolidone-carboxylate peptidase of Gloeobacter violaceus (strain ATCC 29082 / PCC 7421).